The sequence spans 520 residues: Eukaryotic translation initiation factor 3 subunit L (520 aa).

The PCI domain occupies 278-478 (FATYYYVGIC…ELDIALENDL (201 aa)).

It belongs to the eIF-3 subunit L family. In terms of assembly, component of the eukaryotic translation initiation factor 3 (eIF-3) complex.

It localises to the cytoplasm. In terms of biological role, component of the eukaryotic translation initiation factor 3 (eIF-3) complex, which is involved in protein synthesis of a specialized repertoire of mRNAs and, together with other initiation factors, stimulates binding of mRNA and methionyl-tRNAi to the 40S ribosome. The eIF-3 complex specifically targets and initiates translation of a subset of mRNAs involved in cell proliferation. This chain is Eukaryotic translation initiation factor 3 subunit L, found in Yarrowia lipolytica (strain CLIB 122 / E 150) (Yeast).